A 215-amino-acid polypeptide reads, in one-letter code: Probable nicotinate-nucleotide adenylyltransferase (215 aa).

The protein belongs to the NadD family.

The enzyme catalyses nicotinate beta-D-ribonucleotide + ATP + H(+) = deamido-NAD(+) + diphosphate. It participates in cofactor biosynthesis; NAD(+) biosynthesis; deamido-NAD(+) from nicotinate D-ribonucleotide: step 1/1. Catalyzes the reversible adenylation of nicotinate mononucleotide (NaMN) to nicotinic acid adenine dinucleotide (NaAD). In Shewanella putrefaciens (strain CN-32 / ATCC BAA-453), this protein is Probable nicotinate-nucleotide adenylyltransferase.